The primary structure comprises 184 residues: ATP synthase subunit b, chloroplastic (184 aa).

The helical transmembrane segment at 27–49 threads the bilayer; sequence LATNPINLSVVLGVLIFFGKGVL.

Belongs to the ATPase B chain family. As to quaternary structure, F-type ATPases have 2 components, F(1) - the catalytic core - and F(0) - the membrane proton channel. F(1) has five subunits: alpha(3), beta(3), gamma(1), delta(1), epsilon(1). F(0) has four main subunits: a(1), b(1), b'(1) and c(10-14). The alpha and beta chains form an alternating ring which encloses part of the gamma chain. F(1) is attached to F(0) by a central stalk formed by the gamma and epsilon chains, while a peripheral stalk is formed by the delta, b and b' chains.

It localises to the plastid. The protein resides in the chloroplast thylakoid membrane. Its function is as follows. F(1)F(0) ATP synthase produces ATP from ADP in the presence of a proton or sodium gradient. F-type ATPases consist of two structural domains, F(1) containing the extramembraneous catalytic core and F(0) containing the membrane proton channel, linked together by a central stalk and a peripheral stalk. During catalysis, ATP synthesis in the catalytic domain of F(1) is coupled via a rotary mechanism of the central stalk subunits to proton translocation. In terms of biological role, component of the F(0) channel, it forms part of the peripheral stalk, linking F(1) to F(0). The polypeptide is ATP synthase subunit b, chloroplastic (Chloranthus spicatus (Chulantree)).